The primary structure comprises 422 residues: uncharacterized protein (422 aa).

Disordered stretches follow at residues 1–21, 158–218, and 246–271; these read MRDN…TTYD, TAKS…TEQV, and DFGT…PWLT. A compositionally biased stretch (polar residues) spans 11–21; sequence AGSNTQQTTYD. The segment covering 170–199 has biased composition (low complexity); that stretch reads SKSSNGSSSTSTTQRGGSSNENKVKALQVA. 2 stretches are compositionally biased toward polar residues: residues 205 to 216 and 250 to 261; these read GSQGNSGDQGTE and APSSSGSGTQDG. Low complexity predominate over residues 262 to 271; the sequence is TPTPWTPWLT.

This sequence belongs to the adhesin P1 family.

This is an uncharacterized protein from Mycoplasma pneumoniae (strain ATCC 29342 / M129 / Subtype 1) (Mycoplasmoides pneumoniae).